Consider the following 286-residue polypeptide: Bifunctional protein FolD 2 (286 aa).

NADP(+) contacts are provided by residues 165–167, T192, and V233; that span reads GRG.

This sequence belongs to the tetrahydrofolate dehydrogenase/cyclohydrolase family. As to quaternary structure, homodimer.

It catalyses the reaction (6R)-5,10-methylene-5,6,7,8-tetrahydrofolate + NADP(+) = (6R)-5,10-methenyltetrahydrofolate + NADPH. The enzyme catalyses (6R)-5,10-methenyltetrahydrofolate + H2O = (6R)-10-formyltetrahydrofolate + H(+). Its pathway is one-carbon metabolism; tetrahydrofolate interconversion. In terms of biological role, catalyzes the oxidation of 5,10-methylenetetrahydrofolate to 5,10-methenyltetrahydrofolate and then the hydrolysis of 5,10-methenyltetrahydrofolate to 10-formyltetrahydrofolate. The polypeptide is Bifunctional protein FolD 2 (Rhodococcus jostii (strain RHA1)).